The sequence spans 744 residues: Phosphoribosylformylglycinamidine synthase subunit PurL (744 aa).

Residue His45 is part of the active site. 2 residues coordinate ATP: Tyr48 and Lys87. Glu89 provides a ligand contact to Mg(2+). Residues 90-93 (SHNH) and Arg112 each bind substrate. His91 serves as the catalytic Proton acceptor. Residue Asp113 coordinates Mg(2+). Gln236 is a substrate binding site. Asp264 provides a ligand contact to Mg(2+). Position 308 to 310 (308 to 310 (ESQ)) interacts with substrate. Residues Asn492 and Gly529 each contribute to the ATP site. Position 530 (Asn530) interacts with Mg(2+). Ser532 lines the substrate pocket.

It belongs to the FGAMS family. In terms of assembly, monomer. Part of the FGAM synthase complex composed of 1 PurL, 1 PurQ and 2 PurS subunits.

The protein localises to the cytoplasm. It catalyses the reaction N(2)-formyl-N(1)-(5-phospho-beta-D-ribosyl)glycinamide + L-glutamine + ATP + H2O = 2-formamido-N(1)-(5-O-phospho-beta-D-ribosyl)acetamidine + L-glutamate + ADP + phosphate + H(+). Its pathway is purine metabolism; IMP biosynthesis via de novo pathway; 5-amino-1-(5-phospho-D-ribosyl)imidazole from N(2)-formyl-N(1)-(5-phospho-D-ribosyl)glycinamide: step 1/2. In terms of biological role, part of the phosphoribosylformylglycinamidine synthase complex involved in the purines biosynthetic pathway. Catalyzes the ATP-dependent conversion of formylglycinamide ribonucleotide (FGAR) and glutamine to yield formylglycinamidine ribonucleotide (FGAM) and glutamate. The FGAM synthase complex is composed of three subunits. PurQ produces an ammonia molecule by converting glutamine to glutamate. PurL transfers the ammonia molecule to FGAR to form FGAM in an ATP-dependent manner. PurS interacts with PurQ and PurL and is thought to assist in the transfer of the ammonia molecule from PurQ to PurL. The polypeptide is Phosphoribosylformylglycinamidine synthase subunit PurL (Erythrobacter litoralis (strain HTCC2594)).